The following is a 294-amino-acid chain: PAK4-inhibitor INKA2 (294 aa).

Disordered regions lie at residues 50–143, 170–198, and 223–290; these read ISGG…STLM, PELE…RELG, and LKEK…DINT. Residues 85 to 99 are compositionally biased toward polar residues; the sequence is SPSNQASLGSTSSGK. Residues 134–177 form an inka box region; that stretch reads EPDDWTSTLMSRGRNRQPLVLGDNVFADLVGNWLDLPELEKGGE. The span at 171–198 shows a compositional bias: basic and acidic residues; it reads ELEKGGEKGETGEAGEPKGGRGQPRELG. The span at 241–253 shows a compositional bias: basic residues; it reads RSQKVKKRSHSKG.

It belongs to the INKA family. In terms of assembly, interacts with PAK4.

The protein localises to the nucleus. Inhibitor of the serine/threonine-protein kinase PAK4. Acts by binding PAK4 in a substrate-like manner, inhibiting the protein kinase activity. In Bos taurus (Bovine), this protein is PAK4-inhibitor INKA2.